A 179-amino-acid chain; its full sequence is Large ribosomal subunit protein uL5 (179 aa).

Belongs to the universal ribosomal protein uL5 family. As to quaternary structure, part of the 50S ribosomal subunit; part of the 5S rRNA/L5/L18/L25 subcomplex. Contacts the 5S rRNA and the P site tRNA. Forms a bridge to the 30S subunit in the 70S ribosome.

In terms of biological role, this is one of the proteins that bind and probably mediate the attachment of the 5S RNA into the large ribosomal subunit, where it forms part of the central protuberance. In the 70S ribosome it contacts protein S13 of the 30S subunit (bridge B1b), connecting the 2 subunits; this bridge is implicated in subunit movement. Contacts the P site tRNA; the 5S rRNA and some of its associated proteins might help stabilize positioning of ribosome-bound tRNAs. The polypeptide is Large ribosomal subunit protein uL5 (Dichelobacter nodosus (strain VCS1703A)).